We begin with the raw amino-acid sequence, 134 residues long: Probable 4-amino-4-deoxy-L-arabinose-phosphoundecaprenol flippase subunit ArnF (134 aa).

Topologically, residues 1-5 (MNRRR) are cytoplasmic. A helical membrane pass occupies residues 6–26 (GILFALASVLLVSVAQLSMRW). Topologically, residues 27-45 (SMTRLPRPDQWLSVPSVDS) are periplasmic. The helical transmembrane segment at 46–66 (VALAVVLAAIFAYALSMLCWL) threads the bilayer. At 67-77 (AALRDLPLGRA) the chain is on the cytoplasmic side. A helical membrane pass occupies residues 78–98 (YSLLSISYALVYLLAASLPLF). At 99–101 (NES) the chain is on the periplasmic side. The helical transmembrane segment at 102-122 (FSFSKSLGVALVMLGVITINT) threads the bilayer. The Cytoplasmic portion of the chain corresponds to 123 to 134 (RPARAPELRSSP).

The protein belongs to the ArnF family. As to quaternary structure, heterodimer of ArnE and ArnF.

The protein resides in the cell inner membrane. It functions in the pathway bacterial outer membrane biogenesis; lipopolysaccharide biosynthesis. Functionally, translocates 4-amino-4-deoxy-L-arabinose-phosphoundecaprenol (alpha-L-Ara4N-phosphoundecaprenol) from the cytoplasmic to the periplasmic side of the inner membrane. In Pseudomonas fluorescens (strain Pf0-1), this protein is Probable 4-amino-4-deoxy-L-arabinose-phosphoundecaprenol flippase subunit ArnF.